A 345-amino-acid polypeptide reads, in one-letter code: Phosphate acyltransferase (345 aa).

This sequence belongs to the PlsX family. In terms of assembly, homodimer. Probably interacts with PlsY.

Its subcellular location is the cytoplasm. The catalysed reaction is a fatty acyl-[ACP] + phosphate = an acyl phosphate + holo-[ACP]. The protein operates within lipid metabolism; phospholipid metabolism. Functionally, catalyzes the reversible formation of acyl-phosphate (acyl-PO(4)) from acyl-[acyl-carrier-protein] (acyl-ACP). This enzyme utilizes acyl-ACP as fatty acyl donor, but not acyl-CoA. In Dichelobacter nodosus (strain VCS1703A), this protein is Phosphate acyltransferase.